The primary structure comprises 211 residues: Thymidylate kinase (211 aa).

Position 7 to 14 (G7 to S14) interacts with ATP.

Belongs to the thymidylate kinase family.

The enzyme catalyses dTMP + ATP = dTDP + ADP. Phosphorylation of dTMP to form dTDP in both de novo and salvage pathways of dTTP synthesis. This chain is Thymidylate kinase, found in Mesomycoplasma hyopneumoniae (strain 7448) (Mycoplasma hyopneumoniae).